Consider the following 927-residue polypeptide: Isoleucine--tRNA ligase (927 aa).

Positions 60–70 (PYANGNIHLGH) match the 'HIGH' region motif. Glu557 is an L-isoleucyl-5'-AMP binding site. The 'KMSKS' region signature appears at 598–602 (KMSKS). Position 601 (Lys601) interacts with ATP. Positions 895, 898, 915, and 918 each coordinate Zn(2+).

It belongs to the class-I aminoacyl-tRNA synthetase family. IleS type 1 subfamily. In terms of assembly, monomer. The cofactor is Zn(2+).

The protein resides in the cytoplasm. It carries out the reaction tRNA(Ile) + L-isoleucine + ATP = L-isoleucyl-tRNA(Ile) + AMP + diphosphate. Its function is as follows. Catalyzes the attachment of isoleucine to tRNA(Ile). As IleRS can inadvertently accommodate and process structurally similar amino acids such as valine, to avoid such errors it has two additional distinct tRNA(Ile)-dependent editing activities. One activity is designated as 'pretransfer' editing and involves the hydrolysis of activated Val-AMP. The other activity is designated 'posttransfer' editing and involves deacylation of mischarged Val-tRNA(Ile). This chain is Isoleucine--tRNA ligase, found in Syntrophomonas wolfei subsp. wolfei (strain DSM 2245B / Goettingen).